The following is a 141-amino-acid chain: MMPIKVEIVSPEKVLFSRAVDMALIPGLEGDIAAMPDHAPMMLLLRGGVVELHQDGAVTDRFFVAGGFADMTETSCTILADQATALSDLSVEAAQARLAELEASYDKADKMNVPVLDLLMAKMQSARAEIEAAGGPAVQGA.

This sequence belongs to the ATPase epsilon chain family. F-type ATPases have 2 components, CF(1) - the catalytic core - and CF(0) - the membrane proton channel. CF(1) has five subunits: alpha(3), beta(3), gamma(1), delta(1), epsilon(1). CF(0) has three main subunits: a, b and c.

It is found in the cell inner membrane. Produces ATP from ADP in the presence of a proton gradient across the membrane. This is ATP synthase epsilon chain from Gluconacetobacter diazotrophicus (strain ATCC 49037 / DSM 5601 / CCUG 37298 / CIP 103539 / LMG 7603 / PAl5).